Here is a 212-residue protein sequence, read N- to C-terminus: Large ribosomal subunit protein bL25 (212 aa).

It belongs to the bacterial ribosomal protein bL25 family. CTC subfamily. In terms of assembly, part of the 50S ribosomal subunit; part of the 5S rRNA/L5/L18/L25 subcomplex. Contacts the 5S rRNA. Binds to the 5S rRNA independently of L5 and L18.

Functionally, this is one of the proteins that binds to the 5S RNA in the ribosome where it forms part of the central protuberance. This Leptospira interrogans serogroup Icterohaemorrhagiae serovar copenhageni (strain Fiocruz L1-130) protein is Large ribosomal subunit protein bL25.